We begin with the raw amino-acid sequence, 280 residues long: Bifunctional protein FolD (280 aa).

NADP(+)-binding positions include 166 to 168 (GRS) and Ser-191.

It belongs to the tetrahydrofolate dehydrogenase/cyclohydrolase family. As to quaternary structure, homodimer.

It carries out the reaction (6R)-5,10-methylene-5,6,7,8-tetrahydrofolate + NADP(+) = (6R)-5,10-methenyltetrahydrofolate + NADPH. The catalysed reaction is (6R)-5,10-methenyltetrahydrofolate + H2O = (6R)-10-formyltetrahydrofolate + H(+). It participates in one-carbon metabolism; tetrahydrofolate interconversion. Catalyzes the oxidation of 5,10-methylenetetrahydrofolate to 5,10-methenyltetrahydrofolate and then the hydrolysis of 5,10-methenyltetrahydrofolate to 10-formyltetrahydrofolate. The chain is Bifunctional protein FolD from Marinomonas sp. (strain MWYL1).